An 89-amino-acid polypeptide reads, in one-letter code: Small ribosomal subunit protein uS17 (89 aa).

This sequence belongs to the universal ribosomal protein uS17 family. Part of the 30S ribosomal subunit.

Its function is as follows. One of the primary rRNA binding proteins, it binds specifically to the 5'-end of 16S ribosomal RNA. The polypeptide is Small ribosomal subunit protein uS17 (Stenotrophomonas maltophilia (strain K279a)).